Reading from the N-terminus, the 289-residue chain is Heterokaryon incompatibility protein S (289 aa).

Positions 1–227 (MSEPFEIVAG…KIDAIVGRNS (227 aa)) are globular domain. The tract at residues 218–289 (KIDAIVGRNS…EYGGKGFWDN (72 aa)) is prion domain (PrD).

As to quaternary structure, homodimer. Forms heterodimers with het-s.

It is found in the cytoplasm. Functionally, responsible for heterokaryon incompatibility, a process that ensures that during spontaneous, vegetative cell fusion only compatible cells from the same colony survive (non-self-recognition). Interaction with the prion form [het-s] of incompatible cells triggers a lethal reaction that prevents the formation of viable heterokaryons. The chain is Heterokaryon incompatibility protein S (het-S) from Podospora anserina (strain S / ATCC MYA-4624 / DSM 980 / FGSC 10383) (Pleurage anserina).